Here is a 313-residue protein sequence, read N- to C-terminus: Homoserine O-succinyltransferase (313 aa).

Residue cysteine 142 is the Acyl-thioester intermediate of the active site. Residues lysine 163 and serine 192 each coordinate substrate. The active-site Proton acceptor is histidine 235. Residue glutamate 237 is part of the active site. Residue arginine 249 coordinates substrate.

The protein belongs to the MetA family.

The protein localises to the cytoplasm. It carries out the reaction L-homoserine + succinyl-CoA = O-succinyl-L-homoserine + CoA. The protein operates within amino-acid biosynthesis; L-methionine biosynthesis via de novo pathway; O-succinyl-L-homoserine from L-homoserine: step 1/1. In terms of biological role, transfers a succinyl group from succinyl-CoA to L-homoserine, forming succinyl-L-homoserine. The protein is Homoserine O-succinyltransferase of Shewanella baltica (strain OS195).